The primary structure comprises 232 residues: 26.5 kDa heat shock protein, mitochondrial (232 aa).

A mitochondrion-targeting transit peptide spans 1 to 42 (MALARLALRNLQQKLSPSLMGQSCERGLVGNRHNPMKLNRFM). Positions 44–82 (TSAGEQEDKMNTEVSVSEKKSPRQNFPRRRGRKSLWRNT) are disordered. Basic and acidic residues predominate over residues 49-64 (QEDKMNTEVSVSEKKS). The segment covering 69–78 (FPRRRGRKSL) has biased composition (basic residues). Residues 114 to 232 (IFDNFNVNPF…KKNVQEISVE (119 aa)) form the sHSP domain.

It belongs to the small heat shock protein (HSP20) family. May form oligomeric structures.

It localises to the mitochondrion. The sequence is that of 26.5 kDa heat shock protein, mitochondrial (HSP26.5) from Arabidopsis thaliana (Mouse-ear cress).